The following is a 647-amino-acid chain: Frizzled-1 (647 aa).

A signal peptide spans 1-69; sequence MAEEEAPKKS…WLLEAPLLLG (69 aa). Over 73–322 the chain is Extracellular; it reads QAAGQGPGQG…PEELRFSRTW (250 aa). Positions 74–104 are disordered; it reads AAGQGPGQGPGPGQQPPPPPQQQQSGQQYNG. Positions 111–230 constitute an FZ domain; that stretch reads PDHGYCQPIS…HGAGELCVGQ (120 aa). 5 disulfides stabilise this stretch: Cys-116/Cys-177, Cys-124/Cys-170, Cys-161/Cys-198, Cys-187/Cys-227, and Cys-191/Cys-215. Residue Asn-130 is glycosylated (N-linked (GlcNAc...) asparagine). N-linked (GlcNAc...) asparagine glycosylation occurs at Asn-231. Residues 323–343 traverse the membrane as a helical segment; that stretch reads IGIWSVLCCASTLFTVLTYLV. The Cytoplasmic portion of the chain corresponds to 344–354; the sequence is DMRRFSYPERP. Residues 355–375 traverse the membrane as a helical segment; the sequence is IIFLSGCYTAVAVAYIAGFLL. Over 376–402 the chain is Extracellular; the sequence is EDRVVCNDKFAEDGARTVAQGTKKEGC. Residues 403 to 423 form a helical membrane-spanning segment; the sequence is TILFMMLYFFSMASSIWWVIL. Residues 424 to 445 are Cytoplasmic-facing; it reads SLTWFLAAGMKWGHEAIEANSQ. The chain crosses the membrane as a helical span at residues 446–466; the sequence is YFHLAAWAVPAIKTITILALG. Over 467 to 489 the chain is Extracellular; that stretch reads QVDGDVLSGVCFVGLNNVDALRG. Residues 490–510 form a helical membrane-spanning segment; the sequence is FVLAPLFVYLFIGTSFLLAGF. Over 511–536 the chain is Cytoplasmic; that stretch reads VSLFRIRTIMKHDGTKTEKLEKLMVR. The helical transmembrane segment at 537 to 557 threads the bilayer; sequence IGVFSVLYTVPATIVIACYFY. The Extracellular segment spans residues 558-601; it reads EQAFRDQWERSWVAQSCKSYAIPCPHLQAGGGAPPHPPMSPDFT. A helical transmembrane segment spans residues 602-622; that stretch reads VFMIKYLMTLIVGITSGFWIW. Topologically, residues 623 to 647 are cytoplasmic; sequence SGKTLNSWRKFYTRLTNSKQGETTV. A Lys-Thr-X-X-X-Trp motif, mediates interaction with the PDZ domain of Dvl family members motif is present at residues 625–630; it reads KTLNSW. A PDZ-binding motif is present at residues 645 to 647; the sequence is TTV.

It belongs to the G-protein coupled receptor Fz/Smo family. Interacts with MYOC. Interacts with WNT7B. As to quaternary structure, (Microbial infection) Interacts with C.difficile toxin TcdB; frizzled receptors constitute the major host receptors for TcdB in the colonic epithelium. Post-translationally, ubiquitinated by ZNRF3, leading to its degradation by the proteasome. As to expression, expressed in adult heart, placenta, lung, kidney, pancreas, prostate, and ovary and in fetal lung and kidney.

The protein localises to the cell membrane. Functionally, receptor for Wnt proteins. Activated by WNT3A, WNT3, WNT1 and to a lesser extent WNT2, but apparently not by WNT4, WNT5A, WNT5B, WNT6, WNT7A or WNT7B. Contradictory results showing activation by WNT7B have been described for mouse. Functions in the canonical Wnt/beta-catenin signaling pathway. The canonical Wnt/beta-catenin signaling pathway leads to the activation of disheveled proteins, inhibition of GSK-3 kinase, nuclear accumulation of beta-catenin and activation of Wnt target genes. A second signaling pathway involving PKC and calcium fluxes has been seen for some family members, but it is not yet clear if it represents a distinct pathway or if it can be integrated in the canonical pathway, as PKC seems to be required for Wnt-mediated inactivation of GSK-3 kinase. Both pathways seem to involve interactions with G-proteins. May be involved in transduction and intercellular transmission of polarity information during tissue morphogenesis and/or in differentiated tissues. In terms of biological role, (Microbial infection) Acts as a receptor for C.difficile toxin TcdB in the colonic epithelium. The protein is Frizzled-1 (FZD1) of Homo sapiens (Human).